Consider the following 296-residue polypeptide: Formamidopyrimidine-DNA glycosylase (296 aa).

The active-site Schiff-base intermediate with DNA is P2. Catalysis depends on E3, which acts as the Proton donor. K58 functions as the Proton donor; for beta-elimination activity in the catalytic mechanism. Positions 104, 126, and 169 each coordinate DNA. Residues 260 to 296 (SVYDREGQACGTPGCGGTVARIVQAGRSTFYCAACQK) form an FPG-type zinc finger. The Proton donor; for delta-elimination activity role is filled by R286.

The protein belongs to the FPG family. Monomer. Zn(2+) serves as cofactor.

The enzyme catalyses Hydrolysis of DNA containing ring-opened 7-methylguanine residues, releasing 2,6-diamino-4-hydroxy-5-(N-methyl)formamidopyrimidine.. The catalysed reaction is 2'-deoxyribonucleotide-(2'-deoxyribose 5'-phosphate)-2'-deoxyribonucleotide-DNA = a 3'-end 2'-deoxyribonucleotide-(2,3-dehydro-2,3-deoxyribose 5'-phosphate)-DNA + a 5'-end 5'-phospho-2'-deoxyribonucleoside-DNA + H(+). Involved in base excision repair of DNA damaged by oxidation or by mutagenic agents. Acts as a DNA glycosylase that recognizes and removes damaged bases. Has a preference for oxidized purines, such as 7,8-dihydro-8-oxoguanine (8-oxoG). Has AP (apurinic/apyrimidinic) lyase activity and introduces nicks in the DNA strand. Cleaves the DNA backbone by beta-delta elimination to generate a single-strand break at the site of the removed base with both 3'- and 5'-phosphates. The sequence is that of Formamidopyrimidine-DNA glycosylase from Rhizobium etli (strain ATCC 51251 / DSM 11541 / JCM 21823 / NBRC 15573 / CFN 42).